A 70-amino-acid chain; its full sequence is Large ribosomal subunit protein eL24 (70 aa).

4 residues coordinate Zn(2+): cysteine 6, cysteine 9, cysteine 32, and cysteine 36. The C4-type zinc finger occupies 6–36 (CSYCGRPIPPGYGIMYVRVDGVVLRFCSRRC).

The protein belongs to the eukaryotic ribosomal protein eL24 family. Part of the 50S ribosomal subunit. Forms a cluster with proteins L3 and L14. Zn(2+) is required as a cofactor.

Functionally, binds to the 23S rRNA. The polypeptide is Large ribosomal subunit protein eL24 (Caldivirga maquilingensis (strain ATCC 700844 / DSM 13496 / JCM 10307 / IC-167)).